The chain runs to 260 residues: Thiamine thiazole synthase (260 aa).

Residues Ala36, 55–56 (EQ), Gly63, and 154–156 (HVD) contribute to the NAD(+) site. Asp156 and His171 together coordinate Fe cation. Met224 serves as a coordination point for NAD(+). Arg234 contacts glycine.

This sequence belongs to the THI4 family. Homooctamer; tetramer of dimers. Fe(2+) serves as cofactor.

It catalyses the reaction hydrogen sulfide + glycine + NAD(+) = ADP-5-ethyl-4-methylthiazole-2-carboxylate + nicotinamide + 3 H2O + H(+). It functions in the pathway cofactor biosynthesis; thiamine diphosphate biosynthesis. Its function is as follows. Involved in the biosynthesis of the thiazole moiety of thiamine. Catalyzes the conversion of NAD and glycine to adenosine diphosphate 5-(2-hydroxyethyl)-4-methylthiazole-2-carboxylate (ADT), an adenylated thiazole intermediate, using free sulfide as a source of sulfur. In Methanosarcina acetivorans (strain ATCC 35395 / DSM 2834 / JCM 12185 / C2A), this protein is Thiamine thiazole synthase.